The chain runs to 312 residues: Glyoxylate/hydroxypyruvate reductase A (312 aa).

R227 is an active-site residue. The active-site Proton donor is H275.

Belongs to the D-isomer specific 2-hydroxyacid dehydrogenase family. GhrA subfamily.

The protein localises to the cytoplasm. The enzyme catalyses glycolate + NADP(+) = glyoxylate + NADPH + H(+). It catalyses the reaction (R)-glycerate + NAD(+) = 3-hydroxypyruvate + NADH + H(+). The catalysed reaction is (R)-glycerate + NADP(+) = 3-hydroxypyruvate + NADPH + H(+). Its function is as follows. Catalyzes the NADPH-dependent reduction of glyoxylate and hydroxypyruvate into glycolate and glycerate, respectively. The chain is Glyoxylate/hydroxypyruvate reductase A from Escherichia coli O81 (strain ED1a).